A 148-amino-acid chain; its full sequence is MGPEKSTAMTETSAAVRIQAWWRGTLLRRTLLHAALSAWIIQCWWRKIMIMLQGKKRRMALELYARKTWAIVKLQSWFRMWHIRHRYCRLLNAVRIIQVYWRWHSCHTRGFIQGNYEIKENRLNIQLEISLGSQACKVEQCITLPIKE.

IQ domains lie at 11–40 (ETSAAVRIQAWWRGTLLRRTLLHAALSAWI) and 67–96 (KTWAIVKLQSWFRMWHIRHRYCRLLNAVRI).

The chain is IQ domain-containing protein F5 (Iqcf5) from Mus musculus (Mouse).